Reading from the N-terminus, the 478-residue chain is MATALVSAHSLAPLNLKKEGLRVVREDHYSTWEQGFKLQGNSKGLGQEPLCKQFRQLRYEETTGPREALSRLRELCQQWLQPETHTKEQILELLVLEQFLIILPKELQARVQEHHPESREDVVVVLEDLQLDLGETGQQDPDQPKKQKILVEEMAPLKGVQEQQVRHECEVTKPEKEKGEETRIENGKLIVVTDSCGRVESSGKISEPMEAHNEGSNLERHQAKPKEKIEYKCSEREQRFIQHLDLIEHASTHTGKKLCESDVCQSSSLTGHKKVLSREKGHQCHECGKAFQRSSHLVRHQKIHLGEKPYQCNECGKVFSQNAGLLEHLRIHTGEKPYLCIHCGKNFRRSSHLNRHQRIHSQEEPCECKECGKTFSQALLLTHHQRIHSHSKSHQCNECGKAFSLTSDLIRHHRIHTGEKPFKCNICQKAFRLNSHLAQHVRIHNEEKPYQCSECGEAFRQRSGLFQHQRYHHKDKLA.

Residue Lys-17 forms a Glycyl lysine isopeptide (Lys-Gly) (interchain with G-Cter in SUMO2) linkage. The SCAN box domain maps to 51 to 133 (CKQFRQLRYE…VVLEDLQLDL (83 aa)). Disordered stretches follow at residues 159-181 (GVQEQQVRHECEVTKPEKEKGEE) and 200-226 (ESSGKISEPMEAHNEGSNLERHQAKPK). 2 stretches are compositionally biased toward basic and acidic residues: residues 164-181 (QVRHECEVTKPEKEKGEE) and 207-226 (EPMEAHNEGSNLERHQAKPK). A C2H2-type 1; degenerate zinc finger spans residues 231–253 (YKCSEREQRFIQHLDLIEHASTH). 7 C2H2-type zinc fingers span residues 282–304 (HQCHECGKAFQRSSHLVRHQKIH), 310–332 (YQCNECGKVFSQNAGLLEHLRIH), 338–360 (YLCIHCGKNFRRSSHLNRHQRIH), 366–388 (CECKECGKTFSQALLLTHHQRIH), 394–416 (HQCNECGKAFSLTSDLIRHHRIH), 422–444 (FKCNICQKAFRLNSHLAQHVRIH), and 450–472 (YQCSECGEAFRQRSGLFQHQRYH).

Its subcellular location is the nucleus. Functionally, may be involved in transcriptional regulation. In Homo sapiens (Human), this protein is Zinc finger and SCAN domain-containing protein 26 (ZSCAN26).